The chain runs to 262 residues: Small ribosomal subunit protein eS4 (262 aa).

The region spanning 42–105 is the S4 RNA-binding domain; sequence LPLIIMLRNR…GEFFRLLYDV (64 aa).

This sequence belongs to the eukaryotic ribosomal protein eS4 family.

The polypeptide is Small ribosomal subunit protein eS4 (RpS4) (Ixodes scapularis (Black-legged tick)).